We begin with the raw amino-acid sequence, 337 residues long: 5-dehydro-2-deoxygluconokinase (337 aa).

It belongs to the carbohydrate kinase PfkB family.

It catalyses the reaction 5-dehydro-2-deoxy-D-gluconate + ATP = 6-phospho-5-dehydro-2-deoxy-D-gluconate + ADP + H(+). Its pathway is polyol metabolism; myo-inositol degradation into acetyl-CoA; acetyl-CoA from myo-inositol: step 5/7. Its function is as follows. Catalyzes the phosphorylation of 5-dehydro-2-deoxy-D-gluconate (2-deoxy-5-keto-D-gluconate or DKG) to 6-phospho-5-dehydro-2-deoxy-D-gluconate (DKGP). This is 5-dehydro-2-deoxygluconokinase from Geobacillus thermodenitrificans (strain NG80-2).